Consider the following 160-residue polypeptide: Urease accessory protein UreE (160 aa).

It belongs to the UreE family.

It is found in the cytoplasm. Functionally, involved in urease metallocenter assembly. Binds nickel. Probably functions as a nickel donor during metallocenter assembly. The protein is Urease accessory protein UreE of Acinetobacter baumannii (strain AB307-0294).